Consider the following 87-residue polypeptide: Small ribosomal subunit protein uS17 (87 aa).

Belongs to the universal ribosomal protein uS17 family. As to quaternary structure, part of the 30S ribosomal subunit.

Functionally, one of the primary rRNA binding proteins, it binds specifically to the 5'-end of 16S ribosomal RNA. This Bacillus mycoides (strain KBAB4) (Bacillus weihenstephanensis) protein is Small ribosomal subunit protein uS17.